We begin with the raw amino-acid sequence, 235 residues long: Small ribosomal subunit protein uS2c (235 aa).

It belongs to the universal ribosomal protein uS2 family.

It is found in the plastid. The protein localises to the chloroplast. This is Small ribosomal subunit protein uS2c (rps2) from Adiantum capillus-veneris (Maidenhair fern).